We begin with the raw amino-acid sequence, 402 residues long: Tryptophan synthase beta chain (402 aa).

Lys-88 carries the N6-(pyridoxal phosphate)lysine modification.

Belongs to the TrpB family. In terms of assembly, tetramer of two alpha and two beta chains. Pyridoxal 5'-phosphate serves as cofactor.

The catalysed reaction is (1S,2R)-1-C-(indol-3-yl)glycerol 3-phosphate + L-serine = D-glyceraldehyde 3-phosphate + L-tryptophan + H2O. It participates in amino-acid biosynthesis; L-tryptophan biosynthesis; L-tryptophan from chorismate: step 5/5. The beta subunit is responsible for the synthesis of L-tryptophan from indole and L-serine. The chain is Tryptophan synthase beta chain (trpB) from Pasteurella multocida (strain Pm70).